We begin with the raw amino-acid sequence, 261 residues long: Small ribosomal subunit protein uS2 (261 aa).

Positions 224–261 (GRQGEDDEAVQQEEVAEGVSKDSLEDLKKTVEEGSNEE) are disordered. The span at 228–239 (EDDEAVQQEEVA) shows a compositional bias: acidic residues. Positions 242–255 (VSKDSLEDLKKTVE) are enriched in basic and acidic residues.

Belongs to the universal ribosomal protein uS2 family.

The polypeptide is Small ribosomal subunit protein uS2 (rpsB) (Pediococcus acidilactici).